The following is a 533-amino-acid chain: Bifunctional purine biosynthesis protein PurH (533 aa).

Residues 1 to 148 (MDTPRPIKRA…KNHKDVTIVV (148 aa)) enclose the MGS-like domain.

This sequence belongs to the PurH family.

The catalysed reaction is (6R)-10-formyltetrahydrofolate + 5-amino-1-(5-phospho-beta-D-ribosyl)imidazole-4-carboxamide = 5-formamido-1-(5-phospho-D-ribosyl)imidazole-4-carboxamide + (6S)-5,6,7,8-tetrahydrofolate. It catalyses the reaction IMP + H2O = 5-formamido-1-(5-phospho-D-ribosyl)imidazole-4-carboxamide. It participates in purine metabolism; IMP biosynthesis via de novo pathway; 5-formamido-1-(5-phospho-D-ribosyl)imidazole-4-carboxamide from 5-amino-1-(5-phospho-D-ribosyl)imidazole-4-carboxamide (10-formyl THF route): step 1/1. The protein operates within purine metabolism; IMP biosynthesis via de novo pathway; IMP from 5-formamido-1-(5-phospho-D-ribosyl)imidazole-4-carboxamide: step 1/1. The polypeptide is Bifunctional purine biosynthesis protein PurH (Colwellia psychrerythraea (strain 34H / ATCC BAA-681) (Vibrio psychroerythus)).